We begin with the raw amino-acid sequence, 144 residues long: UPF0547 protein C16orf87 homolog (144 aa).

Residues 33 to 112 form a disordered region; it reads HAKQSQRLPP…EEKEKQEKEV (80 aa). Polar residues predominate over residues 35-45; the sequence is KQSQRLPPTSE. The span at 50–62 shows a compositional bias: basic residues; the sequence is PKRRRTERIKRER. Basic and acidic residues-rich tracts occupy residues 63–74 and 99–112; these read IHTAVNRDLENR and KKHE…EKEV. Positions 94–122 form a coiled coil; the sequence is KTATTKKHEEEKEKQEKEVDMYANLSDEK.

Belongs to the UPF0547 family.

The polypeptide is UPF0547 protein C16orf87 homolog (Xenopus laevis (African clawed frog)).